Reading from the N-terminus, the 275-residue chain is Lectin (275 aa).

The signal sequence occupies residues 1-30 (MASLQTQMISFYAIFLSILLTTILFFKVNS). Mn(2+) is bound by residues E149 and D151. 4 residues coordinate Ca(2+): D151, F153, N155, and D159. Mn(2+) is bound by residues D159 and H166. Residue N217 is glycosylated (N-linked (GlcNAc...) asparagine).

Belongs to the leguminous lectin family. As to quaternary structure, tetramer of two alpha and two beta chains.

Its function is as follows. D-mannose specific lectin. The sequence is that of Lectin (LECA) from Pisum sativum (Garden pea).